Here is a 64-residue protein sequence, read N- to C-terminus: uncharacterized protein (64 aa).

2 helical membrane-spanning segments follow: residues 4–24 (IYQYFSLLSFTFSLYFGWLAY) and 35–55 (MYLNVSYCALFLSVMVFTFGM).

The protein resides in the cell membrane. This is an uncharacterized protein from Bacillus subtilis (strain 168).